Consider the following 367-residue polypeptide: MSGSQTLVVKLGTSVLTGGSRRLNRAHIVELVRQCAQQHAKGHRIVIVTSGAIAAGREHLGYPELPATIASKQLLAAVGQSRLIQLWEQLFSIYGIHIGQMLLTRADLEDRERFLNARDTMNALLDNRIVPVINENDAVATAEIKVGDNDNLSALAAILASADKLLLLTDQAGLYTADPRNNPEAELIREVHGIDDVLRGMAGDSVSGLGTGGMATKLQAADVACRAGIDVVIAAGSQVGVIADVIDGTPVGTRFHSLETPLENRKRWIFGAPPAGEITVDDGAVFAIMERGSSLLPKGIRSVKGDFSRGEVIRIRNLNGRDLAHGVSRYNSDALRMLAGHHSQQISEILGYEYGPVAVHRDDMIVS.

Residue Lys-10 participates in ATP binding. Ser-50, Asp-137, and Asn-149 together coordinate substrate. ATP is bound by residues Thr-169–Asp-170 and Thr-211–Lys-217. Residues Ala-275–Glu-353 enclose the PUA domain.

It belongs to the glutamate 5-kinase family.

The protein resides in the cytoplasm. The catalysed reaction is L-glutamate + ATP = L-glutamyl 5-phosphate + ADP. Its pathway is amino-acid biosynthesis; L-proline biosynthesis; L-glutamate 5-semialdehyde from L-glutamate: step 1/2. Functionally, catalyzes the transfer of a phosphate group to glutamate to form L-glutamate 5-phosphate. This chain is Glutamate 5-kinase, found in Yersinia pseudotuberculosis serotype IB (strain PB1/+).